Here is a 322-residue protein sequence, read N- to C-terminus: Hapalindole dimethylallyltransferase (322 aa).

Positions 46, 60, 115, 166, 168, 221, 225, and 275 each coordinate dimethylallyl diphosphate.

It belongs to the aromatic prenyltransferase family.

It carries out the reaction hapalindole G + dimethylallyl diphosphate = ambiguine A + diphosphate. The catalysed reaction is hapalindole U + dimethylallyl diphosphate + H(+) = ambiguine H + diphosphate. Activity is slightly increased in the presence of Mg(2+). Functionally, prenyltransferase involved in the biosynthesis of ambiguines, a family of hapalindole-type alkaloids. Catalyzes the reverse prenylation of hapalindole G or U at the C2 position with dimethylallyl diphosphate (DMAPP) to generate ambiguine A or H, respectively. In addition, accepts hapalindole A, an epimer of hapalindole G, and catalyzes normal prenylation at its C2 position. The chain is Hapalindole dimethylallyltransferase from Fischerella ambigua (strain UTEX 1903).